The sequence spans 325 residues: GMP reductase (325 aa).

The Thioimidate intermediate role is filled by Cys174. 203 to 226 (IIADGGIRTHGDIAKSIRFGATMV) serves as a coordination point for NADP(+).

It belongs to the IMPDH/GMPR family. GuaC type 2 subfamily.

It catalyses the reaction IMP + NH4(+) + NADP(+) = GMP + NADPH + 2 H(+). Functionally, catalyzes the irreversible NADPH-dependent deamination of GMP to IMP. It functions in the conversion of nucleobase, nucleoside and nucleotide derivatives of G to A nucleotides, and in maintaining the intracellular balance of A and G nucleotides. The protein is GMP reductase of Helicobacter pylori (strain G27).